The primary structure comprises 293 residues: Ribosomal protein L11 methyltransferase (293 aa).

S-adenosyl-L-methionine contacts are provided by T145, G166, D188, and N230.

The protein belongs to the methyltransferase superfamily. PrmA family.

The protein resides in the cytoplasm. The catalysed reaction is L-lysyl-[protein] + 3 S-adenosyl-L-methionine = N(6),N(6),N(6)-trimethyl-L-lysyl-[protein] + 3 S-adenosyl-L-homocysteine + 3 H(+). In terms of biological role, methylates ribosomal protein L11. In Serratia proteamaculans (strain 568), this protein is Ribosomal protein L11 methyltransferase.